The following is a 109-amino-acid chain: Thioredoxin-like protein slr1139 (109 aa).

Positions 2 to 107 (SLLEITDAEF…LLELLKEELD (106 aa)) constitute a Thioredoxin domain. Cys-31 and Cys-34 are disulfide-bonded.

It belongs to the thioredoxin family.

This is Thioredoxin-like protein slr1139 from Synechocystis sp. (strain ATCC 27184 / PCC 6803 / Kazusa).